A 391-amino-acid polypeptide reads, in one-letter code: G-patch domain-containing protein 1 (391 aa).

The G-patch domain maps to 15 to 61; it reads KDSAAFKLMKSMGWEEGEGLGKDKQGIKGYVRVTNKQDTSGVGLDKP. Disordered regions lie at residues 80 to 132 and 212 to 307; these read VQAA…EKGK and KASE…PAKR. 2 stretches are compositionally biased toward acidic residues: residues 92–102 and 265–295; these read DDSDKEDESED and NSDDDDDDDDDDDEEDEEEDEDESEADDDDK. The short motif at 305-312 is the Nuclear localization signal element; sequence AKRKHDEI.

Strongly expressed in tissues with high cell proliferation activity that have a high demand for ribosome production such as shoot tips, leaves primordia, root tips and floral buds.

It is found in the nucleus. It localises to the nucleolus. Its function is as follows. Involved in ribosome biogenesis, required for normal progression of rRNA processing. Seems to promote cell proliferation in leaves. This Arabidopsis thaliana (Mouse-ear cress) protein is G-patch domain-containing protein 1.